The primary structure comprises 279 residues: Diaminopimelate epimerase (279 aa).

2 residues coordinate substrate: Asn-13 and Asn-66. The active-site Proton donor is the Cys-75. Substrate is bound by residues 76-77 (GN), Asn-164, Asn-197, and 215-216 (ER). Residue Cys-224 is the Proton acceptor of the active site. 225-226 (GT) is a substrate binding site.

This sequence belongs to the diaminopimelate epimerase family. Homodimer.

It localises to the cytoplasm. It carries out the reaction (2S,6S)-2,6-diaminopimelate = meso-2,6-diaminopimelate. Its pathway is amino-acid biosynthesis; L-lysine biosynthesis via DAP pathway; DL-2,6-diaminopimelate from LL-2,6-diaminopimelate: step 1/1. In terms of biological role, catalyzes the stereoinversion of LL-2,6-diaminopimelate (L,L-DAP) to meso-diaminopimelate (meso-DAP), a precursor of L-lysine and an essential component of the bacterial peptidoglycan. This is Diaminopimelate epimerase from Nostoc punctiforme (strain ATCC 29133 / PCC 73102).